Consider the following 420-residue polypeptide: Glutamate dehydrogenase (420 aa).

Lys105 is an active-site residue. 220 to 226 lines the NAD(+) pocket; it reads GYGNAGY.

Belongs to the Glu/Leu/Phe/Val dehydrogenases family. As to quaternary structure, homohexamer.

The protein resides in the cytoplasm. It catalyses the reaction L-glutamate + NAD(+) + H2O = 2-oxoglutarate + NH4(+) + NADH + H(+). The catalysed reaction is L-glutamate + NADP(+) + H2O = 2-oxoglutarate + NH4(+) + NADPH + H(+). The protein is Glutamate dehydrogenase (gdhA) of Pyrococcus furiosus (strain ATCC 43587 / DSM 3638 / JCM 8422 / Vc1).